Here is a 340-residue protein sequence, read N- to C-terminus: MFDRYLKSVVEGDYLNSEEAYLTARMLLHEDIPEIKAAAFLSALRTRKESQEELTGFVQALYEEAKMVDCGMEVLDTCGTGGDGLGTFNISTASALVVASCGVAVAKHGNRAVTGKVGSADVLEALGVEVQLEPDEARQLLDKAGITFLFAPHYHPILKQVGGLRRGLGIATIFNFMGPLLNPCRPSYQVLGISDSNLQEAVAGTLQRLGRKRALVVHAFNGMDEISPEGKTRVFDVGEHGLEVFDIDPEELGIGGFSLDAIQGGDATASARLVIKVLQGEPGPYRDTVILNTAAALLTAGRAKNIQEGMQMAAEAIDAGKSMETLQKMISFSRDRILAC.

Residues Gly-79, 82-83 (GD), Thr-87, 89-92 (NIST), 107-115 (KHGNRAVTG), and Ser-119 each bind 5-phospho-alpha-D-ribose 1-diphosphate. Gly-79 lines the anthranilate pocket. Ser-91 is a Mg(2+) binding site. Asn-110 serves as a coordination point for anthranilate. Arg-165 is a binding site for anthranilate. Positions 224 and 225 each coordinate Mg(2+).

It belongs to the anthranilate phosphoribosyltransferase family. Homodimer. Mg(2+) is required as a cofactor.

It catalyses the reaction N-(5-phospho-beta-D-ribosyl)anthranilate + diphosphate = 5-phospho-alpha-D-ribose 1-diphosphate + anthranilate. The protein operates within amino-acid biosynthesis; L-tryptophan biosynthesis; L-tryptophan from chorismate: step 2/5. Its function is as follows. Catalyzes the transfer of the phosphoribosyl group of 5-phosphorylribose-1-pyrophosphate (PRPP) to anthranilate to yield N-(5'-phosphoribosyl)-anthranilate (PRA). This is Anthranilate phosphoribosyltransferase from Syntrophomonas wolfei subsp. wolfei (strain DSM 2245B / Goettingen).